The primary structure comprises 1131 residues: DNA polymerase II large subunit (1131 aa).

This sequence belongs to the archaeal DNA polymerase II family. In terms of assembly, heterodimer of a large subunit and a small subunit.

It carries out the reaction DNA(n) + a 2'-deoxyribonucleoside 5'-triphosphate = DNA(n+1) + diphosphate. It catalyses the reaction Exonucleolytic cleavage in the 3'- to 5'-direction to yield nucleoside 5'-phosphates.. Its function is as follows. Possesses two activities: a DNA synthesis (polymerase) and an exonucleolytic activity that degrades single-stranded DNA in the 3'- to 5'-direction. Has a template-primer preference which is characteristic of a replicative DNA polymerase. In Methanococcus maripaludis (strain DSM 14266 / JCM 13030 / NBRC 101832 / S2 / LL), this protein is DNA polymerase II large subunit.